Consider the following 135-residue polypeptide: RDAQAEVQMTNAGVQLAGGSALCRHRPQQSIKRLVIRGRGIQLNDESVSSSLGLRPDGVFQIAGCGRSSFTPRQAVLTLESSSSQPRSGGIGTLQFVEEFTPSVYFNPFSGSPGQYPDEFIPNFDAISESVDGYD.

The propeptide occupies 1–19 (RDAQAEVQMTNAGVQLAGG).

Belongs to the adenoviridae pVIII family.

The sequence is that of Hexon-associated protein (PVIII) from Homo sapiens (Human).